Reading from the N-terminus, the 740-residue chain is ATP-dependent RNA helicase DDX1 (740 aa).

A necessary for interaction with HNRNPK region spans residues 1–295 (MAAFSEMGVM…APKALIVEPS (295 aa)). Positions 1–448 (MAAFSEMGVM…DTVHHVVVPV (448 aa)) are interaction with dsRNA. Residues 1–525 (MAAFSEMGVM…KIDCDNLEQY (525 aa)) are necessary for interaction with RELA. A Helicase ATP-binding domain is found at 2 to 428 (AAFSEMGVMP…SEKIMHFPTW (427 aa)). Residue 46 to 53 (AETGSGKT) participates in ATP binding. In terms of domain architecture, B30.2/SPRY spans 70-247 (DQQEGKKGKT…LKFNFGEEEF (178 aa)). 2 positions are modified to N6-acetyllysine: lysine 239 and lysine 268. N6-acetyllysine; alternate is present on lysine 281. A Glycyl lysine isopeptide (Lys-Gly) (interchain with G-Cter in SUMO2); alternate cross-link involves residue lysine 281. The DEAD box motif lies at 370-373 (DEAD). Residue serine 481 is modified to Phosphoserine. Positions 493–681 (KGEYAVRAIK…QVEPDIKVPV (189 aa)) constitute a Helicase C-terminal domain. A necessary for interaction with HNRNPK region spans residues 525–740 (YFMQQGGGPD…YLPNQLFRTF (216 aa)).

The protein belongs to the DEAD box helicase family. DDX1 subfamily. Found in a multi-helicase-TICAM1 complex at least composed of DHX36, DDX1, DDX21 and TICAM1; this complex exists in resting cells with or without poly(I:C) RNA ligand stimulation. Interacts with DHX36. Interacts (via B30.2/SPRY domain) with DDX21 (via N-terminus); this interaction serves as bridges to TICAM1. Interacts with FAM98A (via N- and C-terminus). Interacts with MBNL1. Interacts with CSTF2. Interacts with HNRNPK. Interacts with ATM. Interacts with RELA (via C-terminus). Component of the tRNA-splicing ligase complex. Interacts with PHF5A (via C-terminus). Interacts with PQBP1. Interacts with ERCC6. Phosphorylated by ATM kinase; phosphorylation is increased in response to ionizing radiation (IR). As to expression, testis-specific. Expressed in the germ line stem cells, spermatogonia and spermatocytes of the testis. Also expressed in the seminoma and nonseminoma types of testicular germ cell tumors (TGCTs) (at protein level).

Its subcellular location is the nucleus. It localises to the cytoplasm. The protein localises to the cytosol. It is found in the cytoplasmic granule. The protein resides in the mitochondrion. The catalysed reaction is ATP + H2O = ADP + phosphate + H(+). Acts as an ATP-dependent RNA helicase, able to unwind both RNA-RNA and RNA-DNA duplexes. Possesses 5' single-stranded RNA overhang nuclease activity. Possesses ATPase activity on various RNA, but not DNA polynucleotides. May play a role in RNA clearance at DNA double-strand breaks (DSBs), thereby facilitating the template-guided repair of transcriptionally active regions of the genome. Together with RELA, acts as a coactivator to enhance NF-kappa-B-mediated transcriptional activation. Acts as a positive transcriptional regulator of cyclin CCND2 expression. Binds to the cyclin CCND2 promoter region. Associates with chromatin at the NF-kappa-B promoter region via association with RELA. Binds to poly(A) RNA. May be involved in 3'-end cleavage and polyadenylation of pre-mRNAs. Component of the tRNA-splicing ligase complex required to facilitate the enzymatic turnover of catalytic subunit RTCB: together with archease (ZBTB8OS), acts by facilitating the guanylylation of RTCB, a key intermediate step in tRNA ligation. Component of a multi-helicase-TICAM1 complex that acts as a cytoplasmic sensor of viral double-stranded RNA (dsRNA) and plays a role in the activation of a cascade of antiviral responses including the induction of pro-inflammatory cytokines via the adapter molecule TICAM1. Specifically binds (via helicase ATP-binding domain) on both short and long poly(I:C) dsRNA. The chain is ATP-dependent RNA helicase DDX1 (Ddx1) from Mus musculus (Mouse).